A 493-amino-acid polypeptide reads, in one-letter code: MILVDKFVTHVISESSFEEMDRIYLTNRVLARVGEGVLEVETNLDKLIDLKDQLVEEAVRLETIEDSQTAREILGTELMDLVTPCPSQVNRDFWEAYAYSPEQAIEDFYQLSQKNDYIKLKAIAKNIAYRVPSDYGELEITINLSKPEKDPKEIAAAKLVQASNYPQCQLCLENEGYHGRVNHPARTNHRIIRFEMVGQEWGFQYSPYAYFNEHCIFLDGQHRPMAISRQSFERLLAIVEQFPGYFAGSNADLPIVGGSILTHDHYQGGRHVFPMELAPLQKTFRFAGFEQVKAGIIKWPMSVLRLTSDSKEDLINLADKIFQEWRQYSDSSVQILAETDGTPHHTITPIARKRDGQFELDLVLRDNQTSAEHPDGIYHPHKDVQHIKKENIGLIEVMGLAILPPRLKEEVEQVASYLVGEAVTVADYHQEWADQLKSQHPDLTDKEKALAIVKDSVGAIFVRVLEDAGVYKQTEQGQAAFMRFVEQVGISLD.

This sequence belongs to the galactose-1-phosphate uridylyltransferase type 2 family.

The protein resides in the cytoplasm. The catalysed reaction is alpha-D-galactose 1-phosphate + UDP-alpha-D-glucose = alpha-D-glucose 1-phosphate + UDP-alpha-D-galactose. The protein operates within carbohydrate metabolism; galactose metabolism. The polypeptide is Galactose-1-phosphate uridylyltransferase (Streptococcus pneumoniae (strain Hungary19A-6)).